The following is a 512-amino-acid chain: Sodium/proline symporter (512 aa).

13 helical membrane passes run 16–36 (WQTYIMIAVYFLILIVIGFYG), 54–74 (IGPYITALSAGASDMSGWMIM), 85–105 (LSAMWITIGLTLGAYINYFVV), 139–159 (IISGLIIVVFFTLYTHSGFVS), 174–194 (FGLILVAFIVIFYTFFGGYLA), 200–220 (FFQGVIMLIAMVMVPIVAMMN), 240–260 (LFKGLSFIGIISLFSWGLGYF), 286–306 (ISWMAVGLLGAVAVGLTGIAF), 327–347 (VLFHPLVGGFLLAAILAAIMS), 381–401 (FVMIGRLSVLVVAIVAIAIAW), 410–430 (LVGNAWAGFGASFSPLVLFAL), 438–458 (AGAVSGMVSGALVVIVWIAWI), and 467–487 (IFGLYEIIPGFIVSVIVTYVV).

It belongs to the sodium:solute symporter (SSF) (TC 2.A.21) family.

Its subcellular location is the cell membrane. It carries out the reaction L-proline(in) + Na(+)(in) = L-proline(out) + Na(+)(out). Its function is as follows. Catalyzes the sodium-dependent uptake of extracellular L-proline. Since most S.aureus strains are L-proline auxotrophs, this transporter may aid the bacterial persistence during an infection of tissues with low proline concentrations. This is Sodium/proline symporter (putP) from Staphylococcus aureus (strain Newman).